A 60-amino-acid polypeptide reads, in one-letter code: Large ribosomal subunit protein uL30 (60 aa).

The protein belongs to the universal ribosomal protein uL30 family. In terms of assembly, part of the 50S ribosomal subunit.

This Leptothrix cholodnii (strain ATCC 51168 / LMG 8142 / SP-6) (Leptothrix discophora (strain SP-6)) protein is Large ribosomal subunit protein uL30.